The following is a 287-amino-acid chain: ATP synthase gamma chain (287 aa).

This sequence belongs to the ATPase gamma chain family. In terms of assembly, F-type ATPases have 2 components, CF(1) - the catalytic core - and CF(0) - the membrane proton channel. CF(1) has five subunits: alpha(3), beta(3), gamma(1), delta(1), epsilon(1). CF(0) has three main subunits: a, b and c.

The protein resides in the cell inner membrane. Produces ATP from ADP in the presence of a proton gradient across the membrane. The gamma chain is believed to be important in regulating ATPase activity and the flow of protons through the CF(0) complex. This is ATP synthase gamma chain from Pectobacterium carotovorum subsp. carotovorum (strain PC1).